We begin with the raw amino-acid sequence, 256 residues long: Pimeloyl-[acyl-carrier protein] methyl ester esterase (256 aa).

One can recognise an AB hydrolase-1 domain in the interval His-15–Pro-242. Substrate contacts are provided by residues Trp-22, Ser-82–Leu-83, and Phe-143–Gln-147. Ser-82 functions as the Nucleophile in the catalytic mechanism. Active-site residues include Asp-207 and His-235. His-235 provides a ligand contact to substrate.

The protein belongs to the AB hydrolase superfamily. Carboxylesterase BioH family. In terms of assembly, monomer.

Its subcellular location is the cytoplasm. The enzyme catalyses 6-carboxyhexanoyl-[ACP] methyl ester + H2O = 6-carboxyhexanoyl-[ACP] + methanol + H(+). It functions in the pathway cofactor biosynthesis; biotin biosynthesis. Functionally, the physiological role of BioH is to remove the methyl group introduced by BioC when the pimeloyl moiety is complete. It allows to synthesize pimeloyl-ACP via the fatty acid synthetic pathway through the hydrolysis of the ester bonds of pimeloyl-ACP esters. The sequence is that of Pimeloyl-[acyl-carrier protein] methyl ester esterase from Escherichia coli (strain K12 / MC4100 / BW2952).